A 270-amino-acid chain; its full sequence is 4-hydroxy-tetrahydrodipicolinate reductase (270 aa).

Residues 11–16 and Glu-37 each bind NAD(+); that span reads GAGGRM. Arg-38 provides a ligand contact to NADP(+). NAD(+) is bound by residues 101–103 and 125–128; these read GTT and APNM. His-158 (proton donor/acceptor) is an active-site residue. Residue His-159 participates in (S)-2,3,4,5-tetrahydrodipicolinate binding. Lys-162 (proton donor) is an active-site residue. Residue 168-169 coordinates (S)-2,3,4,5-tetrahydrodipicolinate; it reads GT.

This sequence belongs to the DapB family.

The protein resides in the cytoplasm. It carries out the reaction (S)-2,3,4,5-tetrahydrodipicolinate + NAD(+) + H2O = (2S,4S)-4-hydroxy-2,3,4,5-tetrahydrodipicolinate + NADH + H(+). The enzyme catalyses (S)-2,3,4,5-tetrahydrodipicolinate + NADP(+) + H2O = (2S,4S)-4-hydroxy-2,3,4,5-tetrahydrodipicolinate + NADPH + H(+). The protein operates within amino-acid biosynthesis; L-lysine biosynthesis via DAP pathway; (S)-tetrahydrodipicolinate from L-aspartate: step 4/4. In terms of biological role, catalyzes the conversion of 4-hydroxy-tetrahydrodipicolinate (HTPA) to tetrahydrodipicolinate. The polypeptide is 4-hydroxy-tetrahydrodipicolinate reductase (Shewanella oneidensis (strain ATCC 700550 / JCM 31522 / CIP 106686 / LMG 19005 / NCIMB 14063 / MR-1)).